The chain runs to 294 residues: Formamidopyrimidine-DNA glycosylase (294 aa).

The active-site Schiff-base intermediate with DNA is proline 2. Glutamate 3 functions as the Proton donor in the catalytic mechanism. Residue lysine 61 is the Proton donor; for beta-elimination activity of the active site. DNA is bound by residues histidine 104, arginine 123, and lysine 169. Residues 255–289 (AVYGRQDEPCRRCGAPIVREKFMNRSSYSCPRCQP) form an FPG-type zinc finger. Arginine 279 functions as the Proton donor; for delta-elimination activity in the catalytic mechanism.

Belongs to the FPG family. Monomer. It depends on Zn(2+) as a cofactor.

It catalyses the reaction Hydrolysis of DNA containing ring-opened 7-methylguanine residues, releasing 2,6-diamino-4-hydroxy-5-(N-methyl)formamidopyrimidine.. The catalysed reaction is 2'-deoxyribonucleotide-(2'-deoxyribose 5'-phosphate)-2'-deoxyribonucleotide-DNA = a 3'-end 2'-deoxyribonucleotide-(2,3-dehydro-2,3-deoxyribose 5'-phosphate)-DNA + a 5'-end 5'-phospho-2'-deoxyribonucleoside-DNA + H(+). Functionally, involved in base excision repair of DNA damaged by oxidation or by mutagenic agents. Acts as a DNA glycosylase that recognizes and removes damaged bases. Has a preference for oxidized purines, such as 7,8-dihydro-8-oxoguanine (8-oxoG). Has AP (apurinic/apyrimidinic) lyase activity and introduces nicks in the DNA strand. Cleaves the DNA backbone by beta-delta elimination to generate a single-strand break at the site of the removed base with both 3'- and 5'-phosphates. This is Formamidopyrimidine-DNA glycosylase from Nocardia farcinica (strain IFM 10152).